The chain runs to 227 residues: Ion-translocating oxidoreductase complex subunit E (227 aa).

The next 5 membrane-spanning stretches (helical) occupy residues 34 to 56 (AINAIGLGMTTTLVLTITNTIIS), 68 to 88 (IPIYMMIISSVVTSIEMLLHA), 91 to 111 (FNLYQSLGIFIPLIVTNCIIV), 127 to 147 (FFDGIFIGLGSMFAMFAVGSI), and 181 to 201 (TIILAVFPPGGFLILGFLIAI).

The protein belongs to the NqrDE/RnfAE family. The complex is composed of six subunits: RnfA, RnfB, RnfC, RnfD, RnfE and RnfG.

The protein localises to the cell inner membrane. Functionally, part of a membrane-bound complex that couples electron transfer with translocation of ions across the membrane. The polypeptide is Ion-translocating oxidoreductase complex subunit E (Buchnera aphidicola subsp. Acyrthosiphon pisum (strain 5A)).